Reading from the N-terminus, the 504-residue chain is Doublesex- and mab-3-related transcription factor A1 (504 aa).

A compositionally biased stretch (basic and acidic residues) spans 1 to 13 (MERSQCGSRDRGV). A disordered region spans residues 1–27 (MERSQCGSRDRGVSGRPHLAPGLVVAA). Positions 97–144 (CARCRNHGVVSALKGHKRFCRWRDCACAKCTLIAERQRVMAAQVALRR) form a DNA-binding region, DM. Disordered regions lie at residues 170-192 (GRAS…AAGA) and 266-307 (SISE…NESE). The segment covering 293-306 (RSLSSSDLESGNES) has biased composition (low complexity). The DMA domain occupies 327–362 (RDPLDILTKIFPNYRRSRLEGILRFCKGDVVQAIEQ).

It belongs to the DMRT family. As to expression, expressed in liver, kidney, pancreas, prostate and weakly detected in testis and ovary.

Its subcellular location is the nucleus. The polypeptide is Doublesex- and mab-3-related transcription factor A1 (DMRTA1) (Homo sapiens (Human)).